The following is a 228-amino-acid chain: Non-specific lipid-transfer protein EPAD1 (228 aa).

The signal sequence occupies residues 1-24 (MERSHLAVLLGLLAFAAGVPAAAA). Intrachain disulfides connect Cys40-Cys62, Cys63-Cys105, and Cys78-Cys119. N-linked (GlcNAc...) asparagine glycosylation occurs at Asn94. A disordered region spans residues 124 to 207 (PPASIVTAPP…PPRSGASSSL (84 aa)). Residues 145–162 (REAPPPPPAAEKLSPPPQ) show a composition bias toward pro residues.

The protein belongs to the plant LTP family. As to expression, expressed in young panicles. Specifically expressed in pollen mother cells and young microspores.

It localises to the cell membrane. Its function is as follows. Plant non-specific lipid-transfer protein that binds phospholipids in vitro. Required for correct pollen exine patterning by controlling the continuity and homogeneity of the primexine distribution. The sequence is that of Non-specific lipid-transfer protein EPAD1 from Oryza sativa subsp. japonica (Rice).